The following is a 385-amino-acid chain: MSVIGIVAEYNPFHSGHEFLLNQARLVSENDPIIVMMSGNYVQRGQMAIMDKWQRAKAALNSGADLVFELPFSFAVQPADIFANGSIRMLSNLGVSELFFGVEDANLNFSYLGQKINQIPKNRMDFRDYTQTYATQYNEMVAREVGHEVNQPNMMLAVAYAVASEQLDTPLHLHPVTRLGSGHDDQLLQDKIISSATAIRNYCLHHPNDLIELKKYLPKGELAALEKQKVYPNWNLLFNFLKYRIESASLEELRSIYQMSEGLEYKMKEEIHNAEDFTSFLRQIKSKRYTYARLRRLCLYTLLNVTEKEMQASYQDVSTLLLGYNSRGRNYLKKIRKDVELPIISKVDKKNAASGTLGLQVRVDRLFEQIMGEDQNFGRRPIEVK.

ATP is bound by residues 7 to 20 (VAEY…HEFL), Gly-101, Asn-153, and Arg-178.

It belongs to the TmcAL family.

The protein resides in the cytoplasm. It catalyses the reaction cytidine(34) in elongator tRNA(Met) + acetate + ATP = N(4)-acetylcytidine(34) in elongator tRNA(Met) + AMP + diphosphate. Its function is as follows. Catalyzes the formation of N(4)-acetylcytidine (ac(4)C) at the wobble position of elongator tRNA(Met), using acetate and ATP as substrates. First activates an acetate ion to form acetyladenylate (Ac-AMP) and then transfers the acetyl group to tRNA to form ac(4)C34. In Lactobacillus gasseri (strain ATCC 33323 / DSM 20243 / BCRC 14619 / CIP 102991 / JCM 1131 / KCTC 3163 / NCIMB 11718 / NCTC 13722 / AM63), this protein is tRNA(Met) cytidine acetate ligase.